Consider the following 249-residue polypeptide: Methyl-coenzyme M reductase I subunit gamma (249 aa).

Arg-120 is a coenzyme M binding site.

Belongs to the methyl-coenzyme M reductase gamma subunit family. MCR is a hexamer of two alpha, two beta, and two gamma chains, forming a dimer of heterotrimers. Coenzyme F430 is required as a cofactor.

The protein localises to the cytoplasm. The enzyme catalyses coenzyme B + methyl-coenzyme M = methane + coenzyme M-coenzyme B heterodisulfide. The protein operates within one-carbon metabolism; methyl-coenzyme M reduction; methane from methyl-coenzyme M: step 1/1. With respect to regulation, methyl-coenzyme M reductase activity is inhibited by 3-nitrooxypropanol (3-NOP) in vitro and in vivo, by oxidation of its active site Ni(I), which stops both growth and methanogenesis. Is also inhibited by the reaction product CoM-S-S-CoB. Functionally, component of the methyl-coenzyme M reductase (MCR) I that catalyzes the reductive cleavage of methyl-coenzyme M (CoM-S-CH3 or 2-(methylthio)ethanesulfonate) using coenzyme B (CoB or 7-mercaptoheptanoylthreonine phosphate) as reductant which results in the production of methane and the mixed heterodisulfide of CoB and CoM (CoM-S-S-CoB). This is the final step in methanogenesis. Neither N-6-mercaptohexanoylthreonine phosphate (H-S-HxoTP) nor N-8-mercaptooctanoylthreonine phosphate (H-SOcoTP) nor any other thiol compound such as CoA or CoM can substitute for CoB as the electron donor. This Methanothermobacter marburgensis (strain ATCC BAA-927 / DSM 2133 / JCM 14651 / NBRC 100331 / OCM 82 / Marburg) (Methanobacterium thermoautotrophicum) protein is Methyl-coenzyme M reductase I subunit gamma (mcrG).